The chain runs to 255 residues: Leucyl/phenylalanyl-tRNA--protein transferase (255 aa).

The protein belongs to the L/F-transferase family.

It is found in the cytoplasm. The enzyme catalyses N-terminal L-lysyl-[protein] + L-leucyl-tRNA(Leu) = N-terminal L-leucyl-L-lysyl-[protein] + tRNA(Leu) + H(+). The catalysed reaction is N-terminal L-arginyl-[protein] + L-leucyl-tRNA(Leu) = N-terminal L-leucyl-L-arginyl-[protein] + tRNA(Leu) + H(+). It catalyses the reaction L-phenylalanyl-tRNA(Phe) + an N-terminal L-alpha-aminoacyl-[protein] = an N-terminal L-phenylalanyl-L-alpha-aminoacyl-[protein] + tRNA(Phe). Functionally, functions in the N-end rule pathway of protein degradation where it conjugates Leu, Phe and, less efficiently, Met from aminoacyl-tRNAs to the N-termini of proteins containing an N-terminal arginine or lysine. The chain is Leucyl/phenylalanyl-tRNA--protein transferase from Burkholderia thailandensis (strain ATCC 700388 / DSM 13276 / CCUG 48851 / CIP 106301 / E264).